The sequence spans 575 residues: RecBCD enzyme subunit RecD (575 aa).

Residue 170-177 (GGPGTGKT) coordinates ATP.

Belongs to the RecD family. Heterotrimer of RecB, RecC and RecD. All subunits contribute to DNA-binding.

It carries out the reaction Couples ATP hydrolysis with the unwinding of duplex DNA at the replication fork by translocating in the 5'-3' direction. This creates two antiparallel DNA single strands (ssDNA). The leading ssDNA polymer is the template for DNA polymerase III holoenzyme which synthesizes a continuous strand.. The catalysed reaction is ATP + H2O = ADP + phosphate + H(+). Functionally, a helicase/nuclease that prepares dsDNA breaks (DSB) for recombinational DNA repair. Binds to DSBs and unwinds DNA via a highly rapid and processive ATP-dependent bidirectional helicase activity. Holoenzyme degrades any linearized DNA that is unable to undergo homologous recombination. In the holoenzyme this subunit has ssDNA-dependent ATPase and 5'-3' helicase activity. When added to pre-assembled RecBC greatly stimulates nuclease activity and augments holoenzyme processivity. Unlike the case in E.coli, suppresses RecA-dependent homologous recombination, is instead required for single-strand annealing pathway repair of DSB. A helicase/nuclease that prepares dsDNA breaks (DSB) for recombinational DNA repair. Binds to DSBs and unwinds DNA via a highly rapid and processive ATP-dependent bidirectional helicase activity. Unwinds dsDNA until it encounters a Chi (crossover hotspot instigator) sequence from the 3' direction. Cuts ssDNA a few nucleotides 3' to the Chi site. The properties and activities of the enzyme are changed at Chi. The Chi-altered holoenzyme produces a long 3'-ssDNA overhang and facilitates RecA-binding to the ssDNA for homologous DNA recombination and repair. Holoenzyme degrades any linearized DNA that is unable to undergo homologous recombination. In the holoenzyme this subunit has ssDNA-dependent ATPase and 5'-3' helicase activity. When added to pre-assembled RecBC greatly stimulates nuclease activity and augments holoenzyme processivity. Negatively regulates the RecA-loading ability of RecBCD. The protein is RecBCD enzyme subunit RecD of Mycobacterium tuberculosis (strain CDC 1551 / Oshkosh).